Here is a 425-residue protein sequence, read N- to C-terminus: Serine--tRNA ligase (425 aa).

Residue 233–235 coordinates L-serine; sequence TAE. Residue 264-266 participates in ATP binding; sequence RRE. Residue Glu287 participates in L-serine binding. 351-354 provides a ligand contact to ATP; that stretch reads EISS. An L-serine-binding site is contributed by Ser387.

Belongs to the class-II aminoacyl-tRNA synthetase family. Type-1 seryl-tRNA synthetase subfamily. Homodimer. The tRNA molecule binds across the dimer.

The protein localises to the cytoplasm. It catalyses the reaction tRNA(Ser) + L-serine + ATP = L-seryl-tRNA(Ser) + AMP + diphosphate + H(+). The catalysed reaction is tRNA(Sec) + L-serine + ATP = L-seryl-tRNA(Sec) + AMP + diphosphate + H(+). The protein operates within aminoacyl-tRNA biosynthesis; selenocysteinyl-tRNA(Sec) biosynthesis; L-seryl-tRNA(Sec) from L-serine and tRNA(Sec): step 1/1. Functionally, catalyzes the attachment of serine to tRNA(Ser). Is also able to aminoacylate tRNA(Sec) with serine, to form the misacylated tRNA L-seryl-tRNA(Sec), which will be further converted into selenocysteinyl-tRNA(Sec). This is Serine--tRNA ligase from Thermotoga petrophila (strain ATCC BAA-488 / DSM 13995 / JCM 10881 / RKU-1).